Consider the following 148-residue polypeptide: SsrA-binding protein (148 aa).

It belongs to the SmpB family.

The protein resides in the cytoplasm. Functionally, required for rescue of stalled ribosomes mediated by trans-translation. Binds to transfer-messenger RNA (tmRNA), required for stable association of tmRNA with ribosomes. tmRNA and SmpB together mimic tRNA shape, replacing the anticodon stem-loop with SmpB. tmRNA is encoded by the ssrA gene; the 2 termini fold to resemble tRNA(Ala) and it encodes a 'tag peptide', a short internal open reading frame. During trans-translation Ala-aminoacylated tmRNA acts like a tRNA, entering the A-site of stalled ribosomes, displacing the stalled mRNA. The ribosome then switches to translate the ORF on the tmRNA; the nascent peptide is terminated with the 'tag peptide' encoded by the tmRNA and targeted for degradation. The ribosome is freed to recommence translation, which seems to be the essential function of trans-translation. The polypeptide is SsrA-binding protein (Burkholderia ambifaria (strain ATCC BAA-244 / DSM 16087 / CCUG 44356 / LMG 19182 / AMMD) (Burkholderia cepacia (strain AMMD))).